Consider the following 206-residue polypeptide: Small ribosomal subunit protein uS4 (206 aa).

The region spanning 96 to 156 is the S4 RNA-binding domain; that stretch reads CRLDNVVYRM…EKSKNQLRIA (61 aa).

This sequence belongs to the universal ribosomal protein uS4 family. In terms of assembly, part of the 30S ribosomal subunit. Contacts protein S5. The interaction surface between S4 and S5 is involved in control of translational fidelity.

In terms of biological role, one of the primary rRNA binding proteins, it binds directly to 16S rRNA where it nucleates assembly of the body of the 30S subunit. Functionally, with S5 and S12 plays an important role in translational accuracy. The sequence is that of Small ribosomal subunit protein uS4 from Pseudomonas aeruginosa (strain LESB58).